The primary structure comprises 61 residues: Large ribosomal subunit protein uL30 (61 aa).

The protein belongs to the universal ribosomal protein uL30 family. As to quaternary structure, part of the 50S ribosomal subunit.

The sequence is that of Large ribosomal subunit protein uL30 from Frankia casuarinae (strain DSM 45818 / CECT 9043 / HFP020203 / CcI3).